The chain runs to 758 residues: Vitamin K-dependent gamma-carboxylase (758 aa).

Residues 1–22 (MAVSAGSARTSPSSDKVQKDKA) are disordered. Ala2 bears the N-acetylalanine mark. The Cytoplasmic segment spans residues 2–60 (AVSAGSARTSPSSDKVQKDKAELISGPRQDSRIGKLLGFEWTDLSSWRRLVTLLNRPTD). A helical transmembrane segment spans residues 61–81 (PASLAVFRFLFGFLMVLDIPQ). Residues 82–113 (ERGLSSLDRKYLDGLDVCRFPLLDALRPLPLD) lie on the Lumenal side of the membrane. The cysteines at positions 99 and 450 are disulfide-linked. Residues 114–134 (WMYLVYTIMFLGALGMMLGLC) traverse the membrane as a helical segment. Residues 135-136 (YR) are Cytoplasmic-facing. Residues 137–157 (ISCVLFLLPYWYVFLLDKTSW) form a helical membrane-spanning segment. The Lumenal segment spans residues 158 to 292 (NNHSYLYGLL…VSYFHCMNSQ (135 aa)). Residue Lys218 is the Proton acceptor of the active site. Residues 293–313 (LFSIGMFSYVMLASSPLFCSP) traverse the membrane as a helical segment. The Cytoplasmic portion of the chain corresponds to 314 to 361 (EWPRKLVSYCPRRLQQLLPLKAAPQPSVSCVYKRSRGKSGQKPGLRHQ). The chain crosses the membrane as a helical span at residues 362–382 (LGAAFTLLYLLEQLFLPYSHF). Residues 383 to 758 (LTQGYNNWTN…SNPDPVHSEF (376 aa)) lie on the Lumenal side of the membrane. Residues Asn459 and Asn550 are each glycosylated (N-linked (GlcNAc...) asparagine). The tract at residues 732–758 (GELNPSNTDSSHSNPPESNPDPVHSEF) is disordered. Over residues 735–747 (NPSNTDSSHSNPP) the composition is skewed to polar residues.

It belongs to the vitamin K-dependent gamma-carboxylase family. Monomer. May interact with CALU.

It is found in the endoplasmic reticulum membrane. The catalysed reaction is 4-carboxy-L-glutamyl-[protein] + 2,3-epoxyphylloquinone + H2O + H(+) = phylloquinol + L-glutamyl-[protein] + CO2 + O2. In terms of biological role, mediates the vitamin K-dependent carboxylation of glutamate residues to calcium-binding gamma-carboxyglutamate (Gla) residues with the concomitant conversion of the reduced hydroquinone form of vitamin K to vitamin K epoxide. Catalyzes gamma-carboxylation of various proteins, such as blood coagulation factors (F2, F7, F9 and F10), osteocalcin (BGLAP) or matrix Gla protein (MGP). The protein is Vitamin K-dependent gamma-carboxylase (GGCX) of Homo sapiens (Human).